The sequence spans 464 residues: Fumarate hydratase class II (464 aa).

Residues S98–T100, H129–D132, S139–N141, and T187 contribute to the substrate site. The Proton donor/acceptor role is filled by H188. S318 is a catalytic residue. Substrate-binding positions include S319 and K324–N326.

Belongs to the class-II fumarase/aspartase family. Fumarase subfamily. As to quaternary structure, homotetramer.

The protein resides in the cytoplasm. The enzyme catalyses (S)-malate = fumarate + H2O. It functions in the pathway carbohydrate metabolism; tricarboxylic acid cycle; (S)-malate from fumarate: step 1/1. Functionally, involved in the TCA cycle. Catalyzes the stereospecific interconversion of fumarate to L-malate. The chain is Fumarate hydratase class II from Wigglesworthia glossinidia brevipalpis.